We begin with the raw amino-acid sequence, 379 residues long: MTSVAKVYYSQTTQTESRPLVAPGIRRRRVLTKDGRSNVRMEHIADKRFLYLKDLWTTFIDMQWRYKLLLFSATFAGTWFLFGVVWYLVAVAHGDLLELGPPANHTPCVVQVHTLTGAFLFSLESQTTIGYGFRYISEECPLAIVLLIAQLVLTTILEIFITGTFLAKIARPKKRAETIRFSQHAVVASHNGKPCLMIRVANMRKSLLIGCQVTGKLLQTHQTKEGENIRLNQVNVTFQVDTASDSPFLILPLTFYHVVDETSPLKDLPLRSGEGDFELVLILSGTVESTSATCQVRTSYLPEEILWGYEFTPAISLSASGKYIADFSLFDQVVKVASPSGLRDSTVRYGDPEKLKLEESLREQAEKEGSALSVRISNV.

Residues 1–61 (MTSVAKVYYS…LKDLWTTFID (61 aa)) lie on the Cytoplasmic side of the membrane. A 1,2-dioctanoyl-sn-glycero-3-phospho-(1D-myo-inositol-4,5-bisphosphate)-binding site is contributed by Arg-36. The chain crosses the membrane as a helical span at residues 62-88 (MQWRYKLLLFSATFAGTWFLFGVVWYL). Over 89–114 (VAVAHGDLLELGPPANHTPCVVQVHT) the chain is Extracellular. Cys-108 and Cys-140 form a disulfide bridge. Positions 115 to 131 (LTGAFLFSLESQTTIGY) form an intramembrane region, discontinuously helical; Pore-forming. The Selectivity filter signature appears at 128-133 (TIGYGF). Over 132 to 140 (GFRYISEEC) the chain is Extracellular. Residues 141–166 (PLAIVLLIAQLVLTTILEIFITGTFL) form a helical membrane-spanning segment. The Cytoplasmic segment spans residues 167–379 (AKIARPKKRA…SALSVRISNV (213 aa)). 3 residues coordinate 1,2-dioctanoyl-sn-glycero-3-phospho-(1D-myo-inositol-4,5-bisphosphate): Lys-168, Arg-171, and Lys-173. Residue 210 to 217 (GCQVTGKL) participates in ATP binding.

The protein belongs to the inward rectifier-type potassium channel (TC 1.A.2.1) family. KCNJ10 subfamily. Homotetramer. In kidney cells, it forms heteromeric channels with Kir5.1/KCNJ16; this interaction is required for KCNJ16 localization to the basolateral membrane. Interacts with MAGI1, alone and possibly as a heteromer with KCNJ16; this interaction may facilitate KCNJ10/KCNJ16 potassium channel expression at the basolateral membrane in kidney cells. Interacts with PATJ. In terms of tissue distribution, widely expressed in adult brain, including in the neocortex, the stratum pyrimadale of the hippocampus and the piriform cortex. Expressed by cultured astrocytes and also by cocultured cortical neurons (at protein level). In the distal segment of the nephron, expressed in the distal convoluted tubule, the connecting tubule, and the early cortical collecting duct.

The protein localises to the membrane. Its subcellular location is the basolateral cell membrane. It catalyses the reaction K(+)(in) = K(+)(out). Channel activity is strongly regulated by variations of cytosolic pH; channels are activated by alkaline and inhibited by acidic pH values. Activated by phosphatidylinositol 4,5 biphosphate (PtdIns(4,5)P2). Inhibited by Ba(2+) and Cs(+). Functionally, may be responsible for potassium buffering action of glial cells in the brain. Inward rectifier potassium channels are characterized by a greater tendency to allow potassium to flow into the cell rather than out of it. Their voltage dependence is regulated by the concentration of extracellular potassium; as external potassium is raised, the voltage range of the channel opening shifts to more positive voltages. The inward rectification is mainly due to the blockage of outward current by internal magnesium. Can be blocked by extracellular barium and cesium. In the kidney, together with KCNJ16, mediates basolateral K(+) recycling in distal tubules; this process is critical for Na(+) reabsorption at the tubules. This Mus musculus (Mouse) protein is ATP-sensitive inward rectifier potassium channel 10.